The following is a 635-amino-acid chain: Paraneoplastic antigen-like protein 8B (635 aa).

Disordered stretches follow at residues 115–202 (PTQA…DESL), 260–332 (TDKS…NPEF), and 492–635 (AARE…PKCR). Residues 133–147 (SETQAQDSGEVTGQA) show a composition bias toward polar residues. A compositionally biased stretch (basic residues) spans 156 to 183 (NPRRGRRGRRNRTRRNRLTQKGKKRSRG). The span at 261 to 273 (DKSKKEEAEKEPA) shows a compositional bias: basic and acidic residues. Acidic residues-rich tracts occupy residues 302–329 (PDEE…ELDN) and 502–524 (GSEE…EASE). The segment covering 531 to 540 (RKPRAKRART) has biased composition (basic residues). A compositionally biased stretch (low complexity) spans 541 to 557 (APRGLTPAGAPPTASGA). Composition is skewed to basic residues over residues 558 to 568 (RKTRAGGRGRG) and 619 to 635 (ARGK…PKCR).

This sequence belongs to the PNMA family.

The protein is Paraneoplastic antigen-like protein 8B of Homo sapiens (Human).